Reading from the N-terminus, the 106-residue chain is ATP-dependent Clp protease adapter protein ClpS (106 aa).

The protein belongs to the ClpS family. As to quaternary structure, binds to the N-terminal domain of the chaperone ClpA.

Its function is as follows. Involved in the modulation of the specificity of the ClpAP-mediated ATP-dependent protein degradation. The protein is ATP-dependent Clp protease adapter protein ClpS of Aliivibrio salmonicida (strain LFI1238) (Vibrio salmonicida (strain LFI1238)).